Reading from the N-terminus, the 308-residue chain is Alternaria stem canker resistance protein 1 (308 aa).

The next 6 membrane-spanning stretches (helical) occupy residues 21-41 (YQDLIFLLFFALFFPVLRFIL), 82-102 (FVYFLSTELLALSVTCNEPWF), 128-148 (LLYMYAGGFYFYSIFATLYWE), 165-185 (VSLIVLSYVYGFARIGSVVLA), 213-233 (FSLFALVFTSLRIICYPFWII), and 254-274 (IILYFVFNALLICLLVLHLFW). One can recognise a TLC domain in the interval 73-287 (NKFKESAWKF…ILRMVKNQIL (215 aa)).

Its subcellular location is the endoplasmic reticulum membrane. Functionally, mediates resistance to sphinganine-analog mycotoxins (SAMs) by restoring the sphingolipid biosynthesis. Could salvage the transport of GPI-anchored proteins from the endoplasmic reticulum to the Golgi apparatus in ceramides-depleted cells after SAM exposure. The protein is Alternaria stem canker resistance protein 1 of Solanum lycopersicum (Tomato).